The primary structure comprises 493 residues: Putative MgpC-like protein MPN_414 (493 aa).

Positions 1-14 (MKPTSLPKNFTNNP) are enriched in polar residues. 2 disordered regions span residues 1–92 (MKPT…GHNS) and 441–493 (KSAR…SGNH). 2 stretches are compositionally biased toward basic and acidic residues: residues 25 to 34 (DNGRAYRKLN) and 44 to 56 (DSTKDGKGKDKDG). 2 stretches are compositionally biased toward polar residues: residues 72-92 (VSSTGSQMSAVTDSQQSGHNS) and 445-472 (ENAQSTSDDNSNTKVKWTKPPRTTSPCR). The segment covering 482–493 (RVTEEERSSGNH) has biased composition (basic and acidic residues).

This sequence belongs to the MgpC family.

This Mycoplasma pneumoniae (strain ATCC 29342 / M129 / Subtype 1) (Mycoplasmoides pneumoniae) protein is Putative MgpC-like protein MPN_414.